The chain runs to 328 residues: DNA-directed RNA polymerase subunit alpha (328 aa).

The segment at 1–233 is alpha N-terminal domain (alpha-NTD); that stretch reads MHNSATEFLK…EQLEAFIDLR (233 aa). The tract at residues 247-328 is alpha C-terminal domain (alpha-CTD); it reads FDPVLLRPVD…WPPVSILKND (82 aa).

This sequence belongs to the RNA polymerase alpha chain family. As to quaternary structure, homodimer. The RNAP catalytic core consists of 2 alpha, 1 beta, 1 beta' and 1 omega subunit. When a sigma factor is associated with the core the holoenzyme is formed, which can initiate transcription.

It catalyses the reaction RNA(n) + a ribonucleoside 5'-triphosphate = RNA(n+1) + diphosphate. Its function is as follows. DNA-dependent RNA polymerase catalyzes the transcription of DNA into RNA using the four ribonucleoside triphosphates as substrates. The protein is DNA-directed RNA polymerase subunit alpha of Wigglesworthia glossinidia brevipalpis.